We begin with the raw amino-acid sequence, 992 residues long: UPF0182 protein MT3285 (992 aa).

Helical transmembrane passes span 17–39 (RILI…LIDA), 59–81 (LATR…FGGL), 113–135 (LVGI…SYWA), 169–191 (LMLS…AHYI), 212–229 (LVSL…AYWL), 255–277 (VLPA…FSAI), and 284–306 (IPAI…WPLI). Residues 906 to 938 (PTEAAVPPSPAANPPPPASGPQPPPVTAAPPVP) are disordered. Over residues 912–938 (PPSPAANPPPPASGPQPPPVTAAPPVP) the composition is skewed to pro residues.

It belongs to the UPF0182 family.

The protein resides in the cell membrane. The protein is UPF0182 protein MT3285 of Mycobacterium tuberculosis (strain CDC 1551 / Oshkosh).